Reading from the N-terminus, the 257-residue chain is Protein KlaA (257 aa).

Its function is as follows. Belongs to the kla operon, which is associated with cryptic tellurite resistance, and IncW plasmid fertility inhibition. This Escherichia coli protein is Protein KlaA (klaA).